The chain runs to 406 residues: 8-amino-7-oxononanoate synthase (406 aa).

Arg21 is a substrate binding site. 112–113 is a pyridoxal 5'-phosphate binding site; it reads GY. Position 137 (His137) interacts with substrate. Residues Ser183, His211, and Thr239 each coordinate pyridoxal 5'-phosphate. N6-(pyridoxal phosphate)lysine is present on Lys242. Thr358 contributes to the substrate binding site.

It belongs to the class-II pyridoxal-phosphate-dependent aminotransferase family. BioF subfamily. Homodimer. It depends on pyridoxal 5'-phosphate as a cofactor.

The catalysed reaction is 6-carboxyhexanoyl-[ACP] + L-alanine + H(+) = (8S)-8-amino-7-oxononanoate + holo-[ACP] + CO2. Its pathway is cofactor biosynthesis; biotin biosynthesis. In terms of biological role, catalyzes the decarboxylative condensation of pimeloyl-[acyl-carrier protein] and L-alanine to produce 8-amino-7-oxononanoate (AON), [acyl-carrier protein], and carbon dioxide. The polypeptide is 8-amino-7-oxononanoate synthase (Burkholderia cenocepacia (strain HI2424)).